A 199-amino-acid polypeptide reads, in one-letter code: uncharacterized protein (199 aa).

This is an uncharacterized protein from Rattus norvegicus (Rat).